We begin with the raw amino-acid sequence, 213 residues long: MLRIGLTGGIGSGKTRVADKLGEWGAAVIDTDAIAHALTQADGLAMPAIIQAFGPEAVRADGAMDRAWVRNRVFREPQARACLEAILHPLIGQETQAAAERAVGSYLVFVVPLLVESGRWRGQLDRICVVDCDPETQIKRVQNRSGLTESDIRRIMDAQAARATRLKAADDVIVNDGSTTAEVLLARARSLHQSYLALADKHDRHGSTEAGPP.

Residues 3–202 (RIGLTGGIGS…QSYLALADKH (200 aa)) enclose the DPCK domain. 11–16 (GSGKTR) provides a ligand contact to ATP.

The protein belongs to the CoaE family.

The protein localises to the cytoplasm. The catalysed reaction is 3'-dephospho-CoA + ATP = ADP + CoA + H(+). It functions in the pathway cofactor biosynthesis; coenzyme A biosynthesis; CoA from (R)-pantothenate: step 5/5. Functionally, catalyzes the phosphorylation of the 3'-hydroxyl group of dephosphocoenzyme A to form coenzyme A. The protein is Dephospho-CoA kinase of Bordetella avium (strain 197N).